Reading from the N-terminus, the 831-residue chain is Heat shock 70 kDa protein 14 (831 aa).

Disordered stretches follow at residues 503–579 and 786–831; these read EEVE…KKKV and TKPK…EGST. Residues 509–526 show a composition bias toward basic and acidic residues; it reads VTKEHSEETTKMDSDKAS. Phosphoserine is present on S533.

Belongs to the heat shock protein 70 (TC 1.A.33) family. HSP110/SSE subfamily. As to quaternary structure, interacts with HTT1 in both cytoplasm and nucleus. As to expression, constitutively expressed.

It is found in the cytoplasm. The protein resides in the nucleus. Its function is as follows. In cooperation with other chaperones, Hsp70s are key components that facilitate folding of de novo synthesized proteins, assist translocation of precursor proteins into organelles, and are responsible for degradation of damaged protein under stress conditions. This is Heat shock 70 kDa protein 14 (HSP70-14) from Arabidopsis thaliana (Mouse-ear cress).